The primary structure comprises 604 residues: Glutamine--fructose-6-phosphate aminotransferase [isomerizing] (604 aa).

Catalysis depends on Cys2, which acts as the Nucleophile; for GATase activity. The 218-residue stretch at 2-219 (CGIMGAVSER…EGDSACVTTQ (218 aa)) folds into the Glutamine amidotransferase type-2 domain. 2 consecutive SIS domains span residues 279–427 (LRAS…DNRA) and 454–594 (LASL…VDQP). The For Fru-6P isomerization activity role is filled by Lys599.

Homodimer.

The protein localises to the cytoplasm. It catalyses the reaction D-fructose 6-phosphate + L-glutamine = D-glucosamine 6-phosphate + L-glutamate. Catalyzes the first step in hexosamine metabolism, converting fructose-6P into glucosamine-6P using glutamine as a nitrogen source. The chain is Glutamine--fructose-6-phosphate aminotransferase [isomerizing] from Legionella pneumophila (strain Lens).